A 430-amino-acid chain; its full sequence is Enolase (430 aa).

A (2R)-2-phosphoglycerate-binding site is contributed by Gln162. The Proton donor role is filled by Glu204. Mg(2+) is bound by residues Asp241, Glu283, and Asp310. Residues Lys335, Arg364, Ser365, and Lys386 each contribute to the (2R)-2-phosphoglycerate site. The active-site Proton acceptor is Lys335.

It belongs to the enolase family. Requires Mg(2+) as cofactor.

It is found in the cytoplasm. Its subcellular location is the secreted. The protein resides in the cell surface. It catalyses the reaction (2R)-2-phosphoglycerate = phosphoenolpyruvate + H2O. It functions in the pathway carbohydrate degradation; glycolysis; pyruvate from D-glyceraldehyde 3-phosphate: step 4/5. In terms of biological role, catalyzes the reversible conversion of 2-phosphoglycerate (2-PG) into phosphoenolpyruvate (PEP). It is essential for the degradation of carbohydrates via glycolysis. The protein is Enolase of Mycobacteroides abscessus (strain ATCC 19977 / DSM 44196 / CCUG 20993 / CIP 104536 / JCM 13569 / NCTC 13031 / TMC 1543 / L948) (Mycobacterium abscessus).